A 158-amino-acid chain; its full sequence is Phosphopantetheine adenylyltransferase (158 aa).

Thr10 contacts substrate. ATP-binding positions include Thr10 to Phe11 and His18. Substrate is bound by residues Lys42, Leu74, and Arg88. ATP is bound by residues Gly89–Arg91, Glu99, and Trp124–Thr130.

Belongs to the bacterial CoaD family. As to quaternary structure, homohexamer. Mg(2+) is required as a cofactor.

The protein localises to the cytoplasm. It carries out the reaction (R)-4'-phosphopantetheine + ATP + H(+) = 3'-dephospho-CoA + diphosphate. It participates in cofactor biosynthesis; coenzyme A biosynthesis; CoA from (R)-pantothenate: step 4/5. Functionally, reversibly transfers an adenylyl group from ATP to 4'-phosphopantetheine, yielding dephospho-CoA (dPCoA) and pyrophosphate. This is Phosphopantetheine adenylyltransferase from Actinobacillus pleuropneumoniae serotype 5b (strain L20).